Consider the following 149-residue polypeptide: MAEQLTEEQIAEFKEAFSLFDKDGDGCITTKELGTVMRSLGQNPTEAELQDMISEADADQNGTIDFPEFLNLMARKMKDTDSEEELKEAFKVFDKDQNGFISAAELRHVMTNLGEKLTDEEVDEMIREADIDGDGQVNYEEFVRMMLAK.

Ala-2 is modified (N-acetylalanine). 4 consecutive EF-hand domains span residues 8–43 (EQIAEFKEAFSLFDKDGDGCITTKELGTVMRSLGQN), 44–79 (PTEAELQDMISEADADQNGTIDFPEFLNLMARKMKD), 81–116 (DSEEELKEAFKVFDKDQNGFISAAELRHVMTNLGEK), and 117–149 (LTDEEVDEMIREADIDGDGQVNYEEFVRMMLAK). 14 residues coordinate Ca(2+): Asp-21, Asp-23, Asp-25, Cys-27, Glu-32, Asp-57, Asp-59, Asn-61, Thr-63, Glu-68, Asp-94, Asp-96, Asn-98, and Glu-105. Lys-116 carries the post-translational modification N6,N6,N6-trimethyllysine. Ca(2+) contacts are provided by Asp-130, Asp-132, Asp-134, Gln-136, and Glu-141.

It belongs to the calmodulin family. High expression in stolon tips and stems, moderate in roots, and very low in leaves. Localized in the meristematic regions of the shoot and root tips, the tip of the developing tuber and the vascular zones of petiole and tuber. Not detected in mesophyll cells.

Calmodulin mediates the control of a large number of enzymes, ion channels and other proteins by Ca(2+). Among the enzymes to be stimulated by the calmodulin-Ca(2+) complex are a number of protein kinases and phosphatases. This Solanum tuberosum (Potato) protein is Calmodulin-1 (PCM1).